A 48-amino-acid chain; its full sequence is Palustrin-3b (48 aa).

An intrachain disulfide couples C43 to C48.

Expressed by the skin glands.

The protein resides in the secreted. Its function is as follows. Antimicrobial activity against Gram-negative bacterium E.coli. The polypeptide is Palustrin-3b (Lithobates palustris (Pickerel frog)).